We begin with the raw amino-acid sequence, 429 residues long: Enolase (429 aa).

Residue Gln-164 participates in (2R)-2-phosphoglycerate binding. The active-site Proton donor is the Glu-206. 3 residues coordinate Mg(2+): Asp-243, Glu-286, and Asp-313. 4 residues coordinate (2R)-2-phosphoglycerate: Lys-338, Arg-367, Ser-368, and Lys-389. Lys-338 functions as the Proton acceptor in the catalytic mechanism.

This sequence belongs to the enolase family. It depends on Mg(2+) as a cofactor.

The protein localises to the cytoplasm. It localises to the secreted. It is found in the cell surface. It catalyses the reaction (2R)-2-phosphoglycerate = phosphoenolpyruvate + H2O. Its pathway is carbohydrate degradation; glycolysis; pyruvate from D-glyceraldehyde 3-phosphate: step 4/5. Catalyzes the reversible conversion of 2-phosphoglycerate (2-PG) into phosphoenolpyruvate (PEP). It is essential for the degradation of carbohydrates via glycolysis. This chain is Enolase, found in Thermotoga sp. (strain RQ2).